The primary structure comprises 156 residues: Small ribosomal subunit protein uS7 (156 aa).

It belongs to the universal ribosomal protein uS7 family. As to quaternary structure, part of the 30S ribosomal subunit. Contacts proteins S9 and S11.

Its function is as follows. One of the primary rRNA binding proteins, it binds directly to 16S rRNA where it nucleates assembly of the head domain of the 30S subunit. Is located at the subunit interface close to the decoding center, probably blocks exit of the E-site tRNA. This chain is Small ribosomal subunit protein uS7, found in Shewanella loihica (strain ATCC BAA-1088 / PV-4).